Reading from the N-terminus, the 492-residue chain is Ribose import ATP-binding protein RbsA (492 aa).

ABC transporter domains lie at I3–K239 and R238–K492. Residue G35–S42 coordinates ATP.

Belongs to the ABC transporter superfamily. Ribose importer (TC 3.A.1.2.1) family. In terms of assembly, the complex is composed of an ATP-binding protein (RbsA), two transmembrane proteins (RbsC) and a solute-binding protein (RbsB).

The protein localises to the cell membrane. It catalyses the reaction D-ribose(out) + ATP + H2O = D-ribose(in) + ADP + phosphate + H(+). In terms of biological role, part of the ABC transporter complex RbsABC involved in ribose import. Responsible for energy coupling to the transport system. The protein is Ribose import ATP-binding protein RbsA of Streptococcus agalactiae serotype V (strain ATCC BAA-611 / 2603 V/R).